The primary structure comprises 328 residues: L-lactate dehydrogenase (328 aa).

Residues Val-18, Glu-39, Lys-46, Tyr-71, and 85–86 (GA) each bind NAD(+). Gln-88 and Arg-94 together coordinate substrate. NAD(+)-binding positions include Ser-107, 124 to 126 (AAN), and Ser-149. Position 126 to 129 (126 to 129 (NPVD)) interacts with substrate. Substrate is bound at residue 154 to 157 (DSAR). Positions 159 and 174 each coordinate beta-D-fructose 1,6-bisphosphate. His-181 functions as the Proton acceptor in the catalytic mechanism. Position 226 is a phosphotyrosine (Tyr-226). Thr-235 serves as a coordination point for substrate.

It belongs to the LDH/MDH superfamily. LDH family. As to quaternary structure, homotetramer.

It localises to the cytoplasm. The catalysed reaction is (S)-lactate + NAD(+) = pyruvate + NADH + H(+). It functions in the pathway fermentation; pyruvate fermentation to lactate; (S)-lactate from pyruvate: step 1/1. Allosterically activated by fructose 1,6-bisphosphate (FBP). Catalyzes the conversion of lactate to pyruvate. This is L-lactate dehydrogenase from Streptococcus thermophilus (strain ATCC BAA-250 / LMG 18311).